The primary structure comprises 215 residues: Large ribosomal subunit protein uL3 (215 aa).

The segment at 136 to 155 (GVSISHRSHGSTGQRQDPGK) is disordered. N5-methylglutamine is present on Q151.

Belongs to the universal ribosomal protein uL3 family. In terms of assembly, part of the 50S ribosomal subunit. Forms a cluster with proteins L14 and L19. In terms of processing, methylated by PrmB.

One of the primary rRNA binding proteins, it binds directly near the 3'-end of the 23S rRNA, where it nucleates assembly of the 50S subunit. This Rickettsia africae (strain ESF-5) protein is Large ribosomal subunit protein uL3.